Reading from the N-terminus, the 199-residue chain is MKAIILAGGHSVRFGKPKAFAEVNGETFYSRVIKTLESTNMFNEIIISTNAQLATQFKYPNVVIDDENHNDKGPLAGIYTIMKQHPEEELFFVVSVDTPMITGKAVSTLYQFLVSHLIENHLDVAAFKEDGRFIPTIAFYSPNALGAITKALHSDNYSFKNVYHELSTDYLDVRDVDAPSYWYKNINYQHDLDALIQKL.

Residues 6-8, Lys18, Asp65, and Asp97 contribute to the GTP site; that span reads LAG. Asp97 lines the Mg(2+) pocket.

This sequence belongs to the MobA family. The cofactor is Mg(2+).

The protein resides in the cytoplasm. It carries out the reaction Mo-molybdopterin + GTP + H(+) = Mo-molybdopterin guanine dinucleotide + diphosphate. In terms of biological role, transfers a GMP moiety from GTP to Mo-molybdopterin (Mo-MPT) cofactor (Moco or molybdenum cofactor) to form Mo-molybdopterin guanine dinucleotide (Mo-MGD) cofactor. The chain is Probable molybdenum cofactor guanylyltransferase from Staphylococcus aureus (strain COL).